The chain runs to 397 residues: Protein Brevis radix-like 1 (397 aa).

2 disordered regions span residues 14-37 and 105-148; these read GAPP…AGEC and RAGS…EDDE. A compositionally biased stretch (acidic residues) spans 124–148; the sequence is AGDEEEEEEEEEEEGTTADGSEDDE. The region spanning 150 to 205 is the BRX 1 domain; sequence KEWVAQVEPGVLITFLSLPEGGNDLKRIRFSREIFNKWQAQRWWAENYEKVMELYN. Disordered regions lie at residues 212-278 and 300-342; these read QTPL…QQHH and SISG…DQER. Residues 220 to 230 are compositionally biased toward basic and acidic residues; sequence KSEDESLKEDI. The segment covering 309–320 has biased composition (low complexity); it reads SSMDASMRSSSS. Residues 342–397 enclose the BRX 2 domain; sequence REWVEEDEPGVYITIRALPGGIRELRRVRFSREKFSEMHARLWWEENRARIHDQYL.

The protein belongs to the BRX family.

Its subcellular location is the nucleus. The chain is Protein Brevis radix-like 1 (BRXL1) from Oryza sativa subsp. japonica (Rice).